The following is a 649-amino-acid chain: Leucine-rich repeat transmembrane protein FLRT3 (649 aa).

A signal peptide spans 1-28 (MISPAWSLFLIGTKIGLFFQVAPLSVMA). Positions 29 to 58 (KSCPSVCRCDAGFIYCNDRSLTSIPVGIPE) constitute an LRRNT domain. Residues 29-528 (KSCPSVCRCD…KEPYKNPNLP (500 aa)) are Extracellular-facing. Intrachain disulfides connect cysteine 31-cysteine 37 and cysteine 35-cysteine 44. The interaction with ADGRL3 stretch occupies residues 38–67 (DAGFIYCNDRSLTSIPVGIPEDATTLYLQN). 10 LRR repeats span residues 59-80 (DATT…SDLK), 84-104 (KVQR…NLPK), 105-126 (YVKE…SLSK), 129-150 (YLEE…EGAF), 155-176 (YLRL…LPRT), 177-197 (IEEL…SLHG), 200-220 (SLKR…GDKV), 226-247 (NLTE…LPGT), 248-269 (SLRK…AFSY), and 272-293 (QLYR…IFDD). N-linked (GlcNAc...) asparagine glycosylation occurs at asparagine 226. Residues asparagine 282 and asparagine 296 are each glycosylated (N-linked (GlcNAc...) asparagine). Residues 305–357 (NPWYCGCKMKWVRDWLQSLPVKVNVRGLMCQAPEKVRGMAIKDLSAELFDCKD) enclose the LRRCT domain. Cysteine 309 and cysteine 334 are oxidised to a cystine. Residues 378 to 405 (QGQWPAPVTKQPDIKNPKLTKDQRTTGS) form a disordered region. Basic and acidic residues predominate over residues 389 to 401 (PDIKNPKLTKDQR). The Fibronectin type-III domain maps to 405–504 (SPSRKTILIT…VCIETQTAPL (100 aa)). The chain crosses the membrane as a helical span at residues 529 to 549 (LAAIIGGAVALVSIALLALVC). The Cytoplasmic segment spans residues 550-649 (WYVHRNGSLF…GIPDLDHSHS (100 aa)). Residues 629–649 (ESSSNRSYRDSGIPDLDHSHS) are disordered.

Monomer and homodimer. Self-associates (via leucine-rich repeats), giving rise to homooligomers. Interacts with FGFR1. Interacts (via extracellular domain) with ADGRL1/LPHN1 and ADGRL3 (via olfactomedin-like domain). Interacts (via extracellular domain) with LPHN2 (via olfactomedin-like domain). Interacts (via extracellular domain) with UNC5B (via Ig domain). May also interact (via extracellular domain) with UNC5A and UNC5C. Interacts (via extracellular domain) with UNC5D (via extracellular domain). Identified in complexes composed of FLRT3, ADGRL3 and UNC5B, respectively FLRT3, ADGRL3 and UNC5D. Interacts (via cytoplasmic domain) with ROBO1. Post-translationally, N-glycosylated. Proteolytic cleavage in the juxtamembrane region gives rise to a soluble ectodomain. Cleavage is probably effected by a metalloprotease. In terms of tissue distribution, detected in brain (at protein level). Detected in brain neurons, especially in basal ganglia, hippocampus dentate gyrus and CA3 region, cerebellum and in olfactory bulb.

Its subcellular location is the cell membrane. The protein localises to the presynaptic cell membrane. It localises to the synapse. The protein resides in the synaptosome. It is found in the postsynaptic density. Its subcellular location is the cell projection. The protein localises to the dendrite. It localises to the axon. The protein resides in the growth cone membrane. It is found in the cytoplasmic vesicle. Its subcellular location is the endoplasmic reticulum membrane. The protein localises to the cell junction. It localises to the focal adhesion. The protein resides in the secreted. In terms of biological role, functions in cell-cell adhesion, cell migration and axon guidance, exerting an attractive or repulsive role depending on its interaction partners. Plays a role in the spatial organization of brain neurons. Plays a role in vascular development in the retina. Plays a role in cell-cell adhesion via its interaction with ADGRL3 and probably also other latrophilins that are expressed at the surface of adjacent cells. Interaction with the intracellular domain of ROBO1 mediates axon attraction towards cells expressing NTN1. Mediates axon growth cone collapse and plays a repulsive role in neuron guidance via its interaction with UNC5B, and possibly also other UNC-5 family members. Promotes neurite outgrowth (in vitro). Mediates cell-cell contacts that promote an increase both in neurite number and in neurite length. Plays a role in the regulation of the density of glutamaergic synapses. Plays a role in fibroblast growth factor-mediated signaling cascades. Required for normal morphogenesis during embryonic development, but not for normal embryonic patterning. Required for normal ventral closure, headfold fusion and definitive endoderm migration during embryonic development. Required for the formation of a normal basement membrane and the maintenance of a normal anterior visceral endoderm during embryonic development. In Rattus norvegicus (Rat), this protein is Leucine-rich repeat transmembrane protein FLRT3 (Flrt3).